A 206-amino-acid polypeptide reads, in one-letter code: Small ribosomal subunit protein uS4 (206 aa).

Residues 96–157 (SRLDNVVYRM…KAKNQARIQN (62 aa)) form the S4 RNA-binding domain.

Belongs to the universal ribosomal protein uS4 family. As to quaternary structure, part of the 30S ribosomal subunit. Contacts protein S5. The interaction surface between S4 and S5 is involved in control of translational fidelity.

Its function is as follows. One of the primary rRNA binding proteins, it binds directly to 16S rRNA where it nucleates assembly of the body of the 30S subunit. In terms of biological role, with S5 and S12 plays an important role in translational accuracy. The polypeptide is Small ribosomal subunit protein uS4 (Chromohalobacter salexigens (strain ATCC BAA-138 / DSM 3043 / CIP 106854 / NCIMB 13768 / 1H11)).